The sequence spans 93 residues: UPF0358 protein ABC2396 (93 aa).

It belongs to the UPF0358 family.

The polypeptide is UPF0358 protein ABC2396 (Shouchella clausii (strain KSM-K16) (Alkalihalobacillus clausii)).